Consider the following 308-residue polypeptide: Large ribosomal subunit protein mL38 (308 aa).

A mitochondrion-targeting transit peptide spans 1–17 (MKRVWPRIPTISNVCRA).

It belongs to the phosphatidylethanolamine-binding protein family. Mitochondrion-specific ribosomal protein mL38 subfamily. As to quaternary structure, component of the mitochondrial large ribosomal subunit (mt-LSU). Mature yeast 74S mitochondrial ribosomes consist of a small (37S) and a large (54S) subunit. The 37S small subunit contains a 15S ribosomal RNA (15S mt-rRNA) and at least 32 different proteins. The 54S large subunit contains a 21S rRNA (21S mt-rRNA) and at least 45 different proteins.

It localises to the mitochondrion. Functionally, component of the mitochondrial ribosome (mitoribosome), a dedicated translation machinery responsible for the synthesis of mitochondrial genome-encoded proteins, including at least some of the essential transmembrane subunits of the mitochondrial respiratory chain. The mitoribosomes are attached to the mitochondrial inner membrane and translation products are cotranslationally integrated into the membrane. This chain is Large ribosomal subunit protein mL38 (mrpl35), found in Schizosaccharomyces pombe (strain 972 / ATCC 24843) (Fission yeast).